The sequence spans 59 residues: UPF0391 membrane protein GbCGDNIH1_2123 (59 aa).

2 consecutive transmembrane segments (helical) span residues L6–S26 and I35–G55.

Belongs to the UPF0391 family.

The protein localises to the cell membrane. This Granulibacter bethesdensis (strain ATCC BAA-1260 / CGDNIH1) protein is UPF0391 membrane protein GbCGDNIH1_2123.